Here is a 1444-residue protein sequence, read N- to C-terminus: Bromodomain-containing protein 4 (1444 aa).

Disordered stretches follow at residues 1 to 44, 154 to 217, 279 to 362, 492 to 523, 540 to 645, 722 to 986, and 1020 to 1422; these read MGDG…PKRQ, VEIS…PQPI, AAPP…KQQE, PVMA…ERAQ, AALS…GGAA, CLRK…SSQP, and TSLM…RREA. A compositionally biased stretch (low complexity) spans 11 to 27; it reads SGSSSSQGQPSSQAPSS. The 107-residue stretch at 43-149 folds into the Bromo 1 domain; that stretch reads RQTNQLQYLL…KVFLTKISEM (107 aa). Polar residues predominate over residues 186-196; sequence ASPQTRGLSNL. Residues 206-216 show a composition bias toward pro residues; the sequence is PQGPPTLPPQP. The segment covering 303 to 319 has biased composition (polar residues); the sequence is TTTPTANDQLNESSPAE. The span at 327-347 shows a compositional bias: basic and acidic residues; sequence PRRDNTRPSKLPKKEAPDSQH. Residues 358-467 form the Bromo 2 domain; the sequence is PKQQEQLRYC…DVFEMRFAKM (110 aa). The span at 498–511 shows a compositional bias: low complexity; that stretch reads SSSDTSSDSSSESE. The tract at residues 498–517 is NPS region; it reads SSSDTSSDSSSESESSTDDS. The tract at residues 538-610 is BID region; the sequence is QLAALSQPQA…SKKLSKKEGG (73 aa). The span at 549–569 shows a compositional bias: basic residues; that stretch reads KPKKKEKEKKEKKKDKHKKKA. The region spanning 633 to 730 is the NET domain; that stretch reads DTEEDLGLTG…SCLRKKKKPA (98 aa). Low complexity-rich tracts occupy residues 746 to 760, 800 to 823, 919 to 954, and 1036 to 1046; these read GTSS…SSSS, LQPQ…HPSP, LQQS…QQQH, and PSLLQSVQVQS. Over residues 1090 to 1109 the composition is skewed to polar residues; sequence PLQTAQTQPGQHKVSMPSTK. Over residues 1110-1121 the composition is skewed to low complexity; it reads AQQIIQQQQATQ. The C-terminal (CTD) region stretch occupies residues 1126–1444; it reads RQHKADSYNS…LMAIFEENLF (319 aa). The span at 1151–1163 shows a compositional bias: polar residues; the sequence is QIPQYSLVHQSPS. The segment covering 1246 to 1255 has biased composition (basic and acidic residues); sequence QDKEKFKQEP. Positions 1282 to 1296 are enriched in low complexity; it reads SSTTPSSGLKSSSDS. Basic and acidic residues predominate over residues 1298–1357; sequence EQFRRAAREKEEREKALKAQVEQAEKDRLRKEQEKLRGRDEEDSIEPPRRPLEEPRRRQE. Positions 1367–1389 are enriched in low complexity; it reads QHQTQAQAQTLNPAQSPSASQPT. A compositionally biased stretch (basic and acidic residues) spans 1405-1422; sequence QQREMARRREQERRRREA.

This sequence belongs to the BET family. In terms of tissue distribution, widely expressed.

Its subcellular location is the nucleus. It is found in the chromosome. Its function is as follows. Chromatin reader protein that recognizes and binds acetylated histones and plays a key role in transmission of epigenetic memory across cell divisions and transcription regulation. Remains associated with acetylated chromatin throughout the entire cell cycle and provides epigenetic memory for postmitotic G1 gene transcription by preserving acetylated chromatin status and maintaining high-order chromatin structure. During interphase, plays a key role in regulating the transcription of signal-inducible genes by associating with the P-TEFb complex and recruiting it to promoters. In Danio rerio (Zebrafish), this protein is Bromodomain-containing protein 4 (brd4).